Here is an 81-residue protein sequence, read N- to C-terminus: Exodeoxyribonuclease 7 small subunit (81 aa).

This sequence belongs to the XseB family. As to quaternary structure, heterooligomer composed of large and small subunits.

The protein localises to the cytoplasm. It catalyses the reaction Exonucleolytic cleavage in either 5'- to 3'- or 3'- to 5'-direction to yield nucleoside 5'-phosphates.. Functionally, bidirectionally degrades single-stranded DNA into large acid-insoluble oligonucleotides, which are then degraded further into small acid-soluble oligonucleotides. The chain is Exodeoxyribonuclease 7 small subunit from Pasteurella multocida (strain Pm70).